A 492-amino-acid polypeptide reads, in one-letter code: Malonyl-CoA decarboxylase, mitochondrial (492 aa).

A mitochondrion-targeting transit peptide spans 1–38 (MRGLGPSLRARRLLPLRYPPRPPGPRGPRLCSGLTASA). The segment at 39 to 189 (MDELLRRAVP…VLKSMLSEWF (151 aa)) is alpha-helical domain. N6-acetyllysine is present on lysine 58. N6-acetyllysine; alternate is present on lysine 167. Lysine 167 bears the N6-succinyllysine; alternate mark. The segment at 190–492 (SSGFLNLERV…VAQFQSNSKL (303 aa)) is catalytic domain. The residue at position 210 (lysine 210) is an N6-acetyllysine. Lysine 221 is modified (N6-succinyllysine). Malonyl-CoA is bound at residue 298 to 304 (QGVELGT). Lysine 316 carries the post-translational modification N6-acetyllysine. Serine 328 lines the malonyl-CoA pocket. The Proton acceptor role is filled by serine 328. Lysine 385 is subject to N6-acetyllysine; alternate. Lysine 385 is modified (N6-succinyllysine; alternate). The residue at position 388 (lysine 388) is an N6-acetyllysine. Malonyl-CoA is bound at residue histidine 422. Histidine 422 acts as the Proton donor in catalysis. 2 positions are modified to N6-acetyllysine: lysine 441 and lysine 471. The short motif at 490 to 492 (SKL) is the Microbody targeting signal element.

In terms of assembly, homotetramer. Dimer of dimers. The two subunits within a dimer display conformational differences suggesting that at any given moment, only one of the two subunits is competent for malonyl-CoA binding and catalytic activity. Under oxidizing conditions, can form disulfide-linked homotetramers (in vitro). Associates with the peroxisomal targeting signal receptor PEX5. Post-translationally, acetylation at Lys-471 activates malonyl-CoA decarboxylase activity. Deacetylation at Lys-471 by SIRT4 represses activity, leading to promote lipogenesis. In terms of processing, interchain disulfide bonds may form in peroxisomes (Potential). Interchain disulfide bonds are not expected to form in the reducing environment of the cytoplasm and mitochondria. Expressed in liver, heart, skeletal muscles and adipose tissues (at protein level). Ubiquitous. Strongly expressed in liver, kidney, heart, skeletal muscle and adipose tissues. Weakly expressed in brain.

The protein localises to the cytoplasm. It localises to the mitochondrion matrix. Its subcellular location is the peroxisome. The protein resides in the peroxisome matrix. It catalyses the reaction malonyl-CoA + H(+) = acetyl-CoA + CO2. It participates in metabolic intermediate biosynthesis; acetyl-CoA biosynthesis; acetyl-CoA from malonyl-CoA: step 1/1. Its activity is regulated as follows. Malonyl-CoA decarboxylase activity does not require any cofactors or divalent metal ions. In terms of biological role, catalyzes the conversion of malonyl-CoA to acetyl-CoA. In the fatty acid biosynthesis MCD selectively removes malonyl-CoA and thus assures that methyl-malonyl-CoA is the only chain elongating substrate for fatty acid synthase and that fatty acids with multiple methyl side chains are produced. In peroxisomes it may be involved in degrading intraperoxisomal malonyl-CoA, which is generated by the peroxisomal beta-oxidation of odd chain-length dicarboxylic fatty acids. Plays a role in the metabolic balance between glucose and lipid oxidation in muscle independent of alterations in insulin signaling. May play a role in controlling the extent of ischemic injury by promoting glucose oxidation. The sequence is that of Malonyl-CoA decarboxylase, mitochondrial from Rattus norvegicus (Rat).